A 352-amino-acid polypeptide reads, in one-letter code: [LysW]-L-2-aminoadipate/[LysW]-L-glutamate phosphate reductase (352 aa).

Residue 13–16 (SGYT) participates in NADP(+) binding. Cys-153 is a catalytic residue. Residue Asn-319 participates in NADP(+) binding.

It belongs to the NAGSA dehydrogenase family. Type 1 subfamily. LysY sub-subfamily.

It is found in the cytoplasm. The enzyme catalyses [amino-group carrier protein]-C-terminal-N-(1-carboxy-5-oxopentan-1-yl)-L-glutamine + phosphate + NADP(+) = [amino-group carrier protein]-C-terminal-N-(1-carboxy-5-phosphooxy-5-oxopentan-1-yl)-L-glutamine + NADPH + H(+). The catalysed reaction is [amino-group carrier protein]-C-terminal-gamma-(L-glutamyl-5-semialdehyde)-L-glutamate + phosphate + NADP(+) = [amino-group carrier protein]-C-terminal-gamma-(5-phospho-L-glutamyl)-L-glutamate + NADPH + H(+). The protein operates within amino-acid biosynthesis; L-lysine biosynthesis via AAA pathway; L-lysine from L-alpha-aminoadipate (Thermus route): step 3/5. It participates in amino-acid biosynthesis; L-arginine biosynthesis. Involved in both the arginine and lysine biosynthetic pathways. The chain is [LysW]-L-2-aminoadipate/[LysW]-L-glutamate phosphate reductase from Saccharolobus solfataricus (strain ATCC 35092 / DSM 1617 / JCM 11322 / P2) (Sulfolobus solfataricus).